We begin with the raw amino-acid sequence, 121 residues long: Large ribosomal subunit protein bL12 (121 aa).

It belongs to the bacterial ribosomal protein bL12 family. In terms of assembly, homodimer. Part of the ribosomal stalk of the 50S ribosomal subunit. Forms a multimeric L10(L12)X complex, where L10 forms an elongated spine to which 2 to 4 L12 dimers bind in a sequential fashion. Binds GTP-bound translation factors.

Forms part of the ribosomal stalk which helps the ribosome interact with GTP-bound translation factors. Is thus essential for accurate translation. The chain is Large ribosomal subunit protein bL12 from Limosilactobacillus reuteri (strain DSM 20016) (Lactobacillus reuteri).